Consider the following 236-residue polypeptide: MYSVLLNPSNTEIYSFLTDRIYRELIVIFATCKVNYKGRAESVASESPRLIILKPDGTVIIHESVKREPLNWQPPGTKIEIMNDYPLKIVAQRNRPKEVIEIDLKEVFYITSAEVKEGDFTIKGREIDIVNTIIQNPSMIEEGFVPLTREYNTPYGKIDLIGLDKKGNFVIIEVKRSKAQLNAISQLYRYYLHMREIKGDKIRGILVAPDLTIHARELLQKLGLEFIRYDIKNYSS.

Belongs to the NucS endonuclease family.

It is found in the cytoplasm. Its function is as follows. Cleaves both 3' and 5' ssDNA extremities of branched DNA structures. This Saccharolobus solfataricus (strain ATCC 35092 / DSM 1617 / JCM 11322 / P2) (Sulfolobus solfataricus) protein is Endonuclease NucS.